We begin with the raw amino-acid sequence, 500 residues long: Squalene epoxidase ERG1 (500 aa).

A helical transmembrane segment spans residues 20–40 (EADVVVVGAGVFGCTMAFALA). Residues 30–31 (VF), 50–51 (ER), Arg-58, Arg-145, Asp-332, and Met-345 each bind FAD. A run of 2 helical transmembrane segments spans residues 450 to 470 (AFLA…LGIF) and 474 to 494 (LAII…IPIM).

Belongs to the squalene monooxygenase family. FAD is required as a cofactor.

The protein localises to the microsome membrane. It is found in the endoplasmic reticulum membrane. It localises to the lipid droplet. It carries out the reaction squalene + reduced [NADPH--hemoprotein reductase] + O2 = (S)-2,3-epoxysqualene + oxidized [NADPH--hemoprotein reductase] + H2O + H(+). The protein operates within terpene metabolism; lanosterol biosynthesis; lanosterol from farnesyl diphosphate: step 2/3. It participates in steroid metabolism; ergosterol biosynthesis. Squalene epoxidase; part of the third module of ergosterol biosynthesis pathway that includes the late steps of the pathway. ERG1 catalyzes the epoxidation of squalene into 2,3-epoxysqualene. The third module or late pathway involves the ergosterol synthesis itself through consecutive reactions that mainly occur in the endoplasmic reticulum (ER) membrane. Firstly, the squalene synthase ERG9 catalyzes the condensation of 2 farnesyl pyrophosphate moieties to form squalene, which is the precursor of all steroids. Squalene synthase is crucial for balancing the incorporation of farnesyl diphosphate (FPP) into sterol and nonsterol isoprene synthesis. Secondly, squalene is converted into lanosterol by the consecutive action of the squalene epoxidase ERG1 and the lanosterol synthase ERG7. Then, the delta(24)-sterol C-methyltransferase ERG6 methylates lanosterol at C-24 to produce eburicol. Eburicol is the substrate of the sterol 14-alpha demethylase encoded by CYP51A, CYP51B and CYP51C, to yield 4,4,24-trimethyl ergosta-8,14,24(28)-trienol. CYP51B encodes the enzyme primarily responsible for sterol 14-alpha-demethylation, and plays an essential role in ascospore formation. CYP51A encodes an additional sterol 14-alpha-demethylase, induced on ergosterol depletion and responsible for the intrinsic variation in azole sensitivity. The third CYP51 isoform, CYP51C, does not encode a sterol 14-alpha-demethylase, but is required for full virulence on host wheat ears. The C-14 reductase ERG24 then reduces the C14=C15 double bond which leads to 4,4-dimethylfecosterol. A sequence of further demethylations at C-4, involving the C-4 demethylation complex containing the C-4 methylsterol oxidases ERG25, the sterol-4-alpha-carboxylate 3-dehydrogenase ERG26 and the 3-keto-steroid reductase ERG27, leads to the production of fecosterol via 4-methylfecosterol. ERG28 has a role as a scaffold to help anchor ERG25, ERG26 and ERG27 to the endoplasmic reticulum. The C-8 sterol isomerase ERG2 then catalyzes the reaction which results in unsaturation at C-7 in the B ring of sterols and thus converts fecosterol to episterol. The sterol-C5-desaturases ERG3A and ERG3BB then catalyze the introduction of a C-5 double bond in the B ring to produce 5-dehydroepisterol. The C-22 sterol desaturases ERG5A and ERG5B further convert 5-dehydroepisterol into ergosta-5,7,22,24(28)-tetraen-3beta-ol by forming the C-22(23) double bond in the sterol side chain. Finally, ergosta-5,7,22,24(28)-tetraen-3beta-ol is substrate of the C-24(28) sterol reductase ERG4 to produce ergosterol. The chain is Squalene epoxidase ERG1 from Gibberella zeae (strain ATCC MYA-4620 / CBS 123657 / FGSC 9075 / NRRL 31084 / PH-1) (Wheat head blight fungus).